Here is a 384-residue protein sequence, read N- to C-terminus: Alkanesulfonate monooxygenase (384 aa).

The protein belongs to the SsuD family.

It catalyses the reaction an alkanesulfonate + FMNH2 + O2 = an aldehyde + FMN + sulfite + H2O + 2 H(+). In terms of biological role, catalyzes the desulfonation of aliphatic sulfonates. The polypeptide is Alkanesulfonate monooxygenase (Burkholderia thailandensis (strain ATCC 700388 / DSM 13276 / CCUG 48851 / CIP 106301 / E264)).